Here is a 454-residue protein sequence, read N- to C-terminus: F-box/WD repeat-containing protein 2 (454 aa).

The 48-residue stretch at 54-101 folds into the F-box domain; that stretch reads RDFLKLLPLELSFYLLKWLDPQTLLTCCLVSKQWNKVISACTEVWQTA. WD repeat units lie at residues 139–175, 179–213, 217–255, 259–306, 313–352, 364–403, and 410–452; these read FETS…LWDV, QCVY…CWEW, ARTQ…VWAL, TCLN…IWPI, KCLK…QWDF, PEIA…RWPL, and KRGS…LWKE. K298 is modified (N6-acetyllysine).

Directly interacts with SKP1 and CUL1.

Its function is as follows. Substrate-recognition component of the SCF (SKP1-CUL1-F-box protein)-type E3 ubiquitin ligase complex. The protein is F-box/WD repeat-containing protein 2 (FBXW2) of Homo sapiens (Human).